Consider the following 350-residue polypeptide: Ion-translocating oxidoreductase complex subunit D (350 aa).

The next 5 membrane-spanning stretches (helical) occupy residues 20–40 (IMMLVLIAALPGIATQLWFFG), 42–62 (GTLFQIILAAVSALAAEAAVL), 68–88 (PIAAILKDNSALLTGLLLAVS), 89–109 (IPPLAPWWMVVLGTVFAVIIA), and 123–143 (PAMIGYVVLLISFPVQMTSWL). Thr-187 bears the FMN phosphoryl threonine mark. The next 5 helical transmembrane spans lie at 215-235 (LAGAGWQWVNIAWLIGGVWLL), 244-264 (IPVSFLVTLAVCSTLGWAFAG), 267-287 (LASPQLHLLSGATMLGAFFIL), 301-321 (LIFGALAGLLVWLIRSFGGYP), and 322-342 (DGVAFAVLLANITVPLIDYYT).

Belongs to the NqrB/RnfD family. As to quaternary structure, the complex is composed of six subunits: RnfA, RnfB, RnfC, RnfD, RnfE and RnfG. FMN serves as cofactor.

The protein localises to the cell inner membrane. Functionally, part of a membrane-bound complex that couples electron transfer with translocation of ions across the membrane. The protein is Ion-translocating oxidoreductase complex subunit D of Citrobacter koseri (strain ATCC BAA-895 / CDC 4225-83 / SGSC4696).